A 533-amino-acid chain; its full sequence is NEDD8-activating enzyme E1 regulatory subunit (533 aa).

An interaction with uba3 region spans residues 330 to 343 (DMIADSDKFIKLQN).

Belongs to the ubiquitin-activating E1 family. ULA1 subfamily. As to quaternary structure, heterodimer of uba3 and nae1. The complex binds nedd8 and ube2m.

The protein operates within protein modification; protein neddylation. In terms of biological role, regulatory subunit of the dimeric uba3-nae1 E1 enzyme. E1 activates nedd8 by first adenylating its C-terminal glycine residue with ATP, thereafter linking this residue to the side chain of the catalytic cysteine, yielding a nedd8-uba3 thioester and free AMP. E1 finally transfers nedd8 to the catalytic cysteine of ube2m. The covalent attachment of nedd8 to target proteins is known as 'neddylation' and the process is involved in the regulation of cell growth, viability and development. The polypeptide is NEDD8-activating enzyme E1 regulatory subunit (nae1) (Danio rerio (Zebrafish)).